The primary structure comprises 335 residues: MRIAVDVMGGDFAPQEIIRGAEAAVREWGFEVILVGNEEAIAKYADSRLCLPVVRAPQVVQMDESPVVAVKRKPDSSVVKAVELVKDGRADAAVSAGHTGATFAASLFRLGRIRGVERPALASVIPNEQGQTVLLDIGANVDCKPGHLLKFGIMGSLYARQVLGVPNPRVGLLSIGEEASKGNEQTLTVFPLFERAPFDFVGNVEGGDLFSGRVDVVVCDGFVGNIALKTGEGVVRTLEKAVKQEVATNWISKVCALPTVYTLRNIRKRFDYTEYGGAPLLGVNGVVVVSHGRSNAKAVKNAIRVAGEAVRTNLVGTIAGGIGDVRENGAETADG.

It belongs to the PlsX family. As to quaternary structure, homodimer. Probably interacts with PlsY.

It is found in the cytoplasm. It catalyses the reaction a fatty acyl-[ACP] + phosphate = an acyl phosphate + holo-[ACP]. The protein operates within lipid metabolism; phospholipid metabolism. In terms of biological role, catalyzes the reversible formation of acyl-phosphate (acyl-PO(4)) from acyl-[acyl-carrier-protein] (acyl-ACP). This enzyme utilizes acyl-ACP as fatty acyl donor, but not acyl-CoA. This chain is Phosphate acyltransferase, found in Desulforudis audaxviator (strain MP104C).